Consider the following 92-residue polypeptide: MARSLKKNPFVANHLLRKINMLNTKAEKEIIVTWSRASTIIPTMIGHTIAVHNGKEHLPIYITDRMVGHKLGEFAPTLNFRGHAKNDNRSRR.

The protein belongs to the universal ribosomal protein uS19 family.

The protein localises to the plastid. It localises to the chloroplast. Functionally, protein S19 forms a complex with S13 that binds strongly to the 16S ribosomal RNA. In Morus indica (Mulberry), this protein is Small ribosomal subunit protein uS19c.